A 212-amino-acid polypeptide reads, in one-letter code: Superoxide dismutase [Fe] 1, chloroplastic (212 aa).

Ala-2 bears the N-acetylalanine mark. Residues His-35, His-87, Asp-169, and His-173 each coordinate Fe cation.

Belongs to the iron/manganese superoxide dismutase family. Homodimer. Interacts with cpn20/cpn21. Fe cation serves as cofactor.

Its subcellular location is the cell membrane. The protein resides in the plastid. The protein localises to the chloroplast membrane. It localises to the chloroplast stroma. It catalyses the reaction 2 superoxide + 2 H(+) = H2O2 + O2. With respect to regulation, activated by cpn20/cpn21. In terms of biological role, destroys superoxide anion radicals which are normally produced within the cells and which are toxic to biological systems. The polypeptide is Superoxide dismutase [Fe] 1, chloroplastic (FSD1) (Arabidopsis thaliana (Mouse-ear cress)).